Consider the following 314-residue polypeptide: N-myc-interactor (314 aa).

The tract at residues 1–24 (MDADKDNIKQACDERSAEMDDMRG) is disordered. The residue at position 16 (S16) is a Phosphoserine. A coiled-coil region spans residues 31-65 (VHEIMSENKELDEEIKKLEAELQSDAREFQIKENV). NID domains follow at residues 104–193 (GQAL…GEVE) and 202–293 (RSAV…EVEV).

Belongs to the NMI family. In terms of assembly, interacts with MYCN and MYC, as well as with other transcription factors with a Zip, HLH or a HLH-Zip motif. Interacts with all STAT proteins except STAT2. Interacts with IRF7, the interaction is direct and leads to the inhibition of IRF7-mediated type I IFN production. Interacts (via coiled-coil domain) with TRIM21 (via the SPRY domain); the interaction leads to 'Lys-63'-linked ubiquitination of NMI. Interacts with IFI35; the interaction is direct and is facilitated by TRIM21. Interacts with TLR4; the interaction is direct and leads to NF-kappa-B activation. Post-translationally, may be ubiquitinated. In terms of tissue distribution, expressed in macrophages.

It is found in the cytoplasm. It localises to the nucleus. The protein localises to the secreted. Functionally, acts as a signaling pathway regulator involved in innate immune system response. In response to interleukin 2/IL2 and interferon IFN-gamma/IFNG, interacts with signal transducer and activator of transcription/STAT which activate the transcription of downstream genes involved in a multitude of signals for development and homeostasis. Enhances the recruitment of CBP/p300 coactivators to STAT1 and STAT5, resulting in increased STAT1- and STAT5-dependent transcription. In response to interferon IFN-alpha, associates in a complex with transcriptional regulator IFI35 to regulate immune response; the complex formation prevents proteasome-mediated degradation of IFI35. In complex with IFI35, negatively regulates nuclear factor NF-kappa-B signaling by inhibiting the nuclear translocation, activation and transcription of NF-kappa-B subunit p65/RELA, resulting in the inhibition of endothelial cell proliferation, migration and re-endothelialization of injured arteries. Negatively regulates virus-triggered type I interferon/IFN production by inducing proteosome-dependent degradation of IRF7, a transcriptional regulator of type I IFN, thereby interfering with cellular antiviral responses. Beside its role as an intracellular signaling pathway regulator, also functions extracellularly as damage-associated molecular patterns (DAMPs) to promote inflammation, when actively released by macrophage to the extracellular space during cell injury or pathogen invasion. Macrophage-secreted NMI activates NF-kappa-B signaling in adjacent macrophages through Toll-like receptor 4/TLR4 binding and activation, thereby inducing NF-kappa-B translocation from the cytoplasm into the nucleus which promotes the release of pro-inflammatory cytokines. The protein is N-myc-interactor of Mus musculus (Mouse).